The sequence spans 413 residues: Probable isoleucine--tRNA ligase, mitochondrial (413 aa).

The short motif at 298-302 (KMSKS) is the 'KMSKS' region element. An ATP-binding site is contributed by K301.

This sequence belongs to the class-I aminoacyl-tRNA synthetase family.

The protein localises to the mitochondrion matrix. The enzyme catalyses tRNA(Ile) + L-isoleucine + ATP = L-isoleucyl-tRNA(Ile) + AMP + diphosphate. In Ciona intestinalis (Transparent sea squirt), this protein is Probable isoleucine--tRNA ligase, mitochondrial.